A 126-amino-acid polypeptide reads, in one-letter code: Small ribosomal subunit protein uS13 (126 aa).

Residues histidine 92–lysine 126 are disordered.

The protein belongs to the universal ribosomal protein uS13 family. As to quaternary structure, part of the 30S ribosomal subunit. Forms a loose heterodimer with protein S19. Forms two bridges to the 50S subunit in the 70S ribosome.

Located at the top of the head of the 30S subunit, it contacts several helices of the 16S rRNA. In the 70S ribosome it contacts the 23S rRNA (bridge B1a) and protein L5 of the 50S subunit (bridge B1b), connecting the 2 subunits; these bridges are implicated in subunit movement. Contacts the tRNAs in the A and P-sites. The sequence is that of Small ribosomal subunit protein uS13 from Deinococcus radiodurans (strain ATCC 13939 / DSM 20539 / JCM 16871 / CCUG 27074 / LMG 4051 / NBRC 15346 / NCIMB 9279 / VKM B-1422 / R1).